Reading from the N-terminus, the 202-residue chain is B-cell CLL/lymphoma 7 protein family member B (202 aa).

Residues 53-202 (DSKEKEKSKS…PAVPQTASES (150 aa)) form a disordered region. The segment covering 90-99 (ENSNQSSVSD) has biased composition (polar residues). The segment covering 107–123 (SSTNSSPSPQQSESLSP) has biased composition (low complexity). Phosphoserine is present on residues Ser-114, Ser-118, Ser-120, Ser-122, Ser-127, Ser-148, and Ser-152.

It belongs to the BCL7 family.

Positive regulator of apoptosis. Plays a role in the Wnt signaling pathway, negatively regulating the expression of Wnt signaling components CTNNB1 and HMGA1. Involved in cell cycle progression, maintenance of the nuclear structure and stem cell differentiation. May play a role in lung tumor development or progression. The sequence is that of B-cell CLL/lymphoma 7 protein family member B (BCL7B) from Bos taurus (Bovine).